The primary structure comprises 201 residues: Adenylyl-sulfate kinase (201 aa).

35–42 (GLSGSGKS) provides a ligand contact to ATP. Ser-109 functions as the Phosphoserine intermediate in the catalytic mechanism.

The protein belongs to the APS kinase family.

The enzyme catalyses adenosine 5'-phosphosulfate + ATP = 3'-phosphoadenylyl sulfate + ADP + H(+). The protein operates within sulfur metabolism; hydrogen sulfide biosynthesis; sulfite from sulfate: step 2/3. In terms of biological role, catalyzes the synthesis of activated sulfate. In Klebsiella pneumoniae (strain 342), this protein is Adenylyl-sulfate kinase.